Here is a 261-residue protein sequence, read N- to C-terminus: Adenosylcobinamide-GDP ribazoletransferase (261 aa).

Transmembrane regions (helical) follow at residues G4–W26, L40–L60, P62–L82, V110–M130, F140–I160, C197–F217, and I237–L257.

The protein belongs to the CobS family. It depends on Mg(2+) as a cofactor.

It localises to the cell membrane. The enzyme catalyses alpha-ribazole + adenosylcob(III)inamide-GDP = adenosylcob(III)alamin + GMP + H(+). It carries out the reaction alpha-ribazole 5'-phosphate + adenosylcob(III)inamide-GDP = adenosylcob(III)alamin 5'-phosphate + GMP + H(+). It functions in the pathway cofactor biosynthesis; adenosylcobalamin biosynthesis; adenosylcobalamin from cob(II)yrinate a,c-diamide: step 7/7. In terms of biological role, joins adenosylcobinamide-GDP and alpha-ribazole to generate adenosylcobalamin (Ado-cobalamin). Also synthesizes adenosylcobalamin 5'-phosphate from adenosylcobinamide-GDP and alpha-ribazole 5'-phosphate. This chain is Adenosylcobinamide-GDP ribazoletransferase, found in Halalkalibacterium halodurans (strain ATCC BAA-125 / DSM 18197 / FERM 7344 / JCM 9153 / C-125) (Bacillus halodurans).